A 289-amino-acid polypeptide reads, in one-letter code: Metal-staphylopine import system permease protein CntC (289 aa).

5 helical membrane passes run 13-33 (AVIA…APLV), 77-97 (LLYV…LGFL), 115-135 (VMLA…FGMG), 194-214 (IAII…GFSF), and 249-269 (IAIV…QIAI). Positions 73-262 (IRPSLLYVFV…IIVMAFNFLS (190 aa)) constitute an ABC transmembrane type-1 domain.

This sequence belongs to the binding-protein-dependent transport system permease family. As to quaternary structure, the complex is composed of two ATP-binding proteins (CntD and CntF), two transmembrane proteins (CntB and CntC) and a solute-binding protein (CntA).

It localises to the cell membrane. Nickel/cobalt import is reduced in the presence of zinc. Its function is as follows. Part of the ABC transporter complex CntABCDF (Opp1) involved in the uptake of metal in complex with the metallophore staphylopine (StP). Involved in the import of divalent metals ions such as nickel, cobalt and zinc. Probably responsible for the translocation of the substrate across the membrane. Plays a major role in nickel/cobalt import in zinc-depleted conditions. Contributes to virulence. Required for full urease activity in vitro. This Staphylococcus aureus (strain NCTC 8325 / PS 47) protein is Metal-staphylopine import system permease protein CntC.